Consider the following 133-residue polypeptide: Ribosome-binding factor A (133 aa).

It belongs to the RbfA family. As to quaternary structure, monomer. Binds 30S ribosomal subunits, but not 50S ribosomal subunits or 70S ribosomes.

It localises to the cytoplasm. One of several proteins that assist in the late maturation steps of the functional core of the 30S ribosomal subunit. Associates with free 30S ribosomal subunits (but not with 30S subunits that are part of 70S ribosomes or polysomes). Required for efficient processing of 16S rRNA. May interact with the 5'-terminal helix region of 16S rRNA. This Nostoc sp. (strain PCC 7120 / SAG 25.82 / UTEX 2576) protein is Ribosome-binding factor A.